A 122-amino-acid polypeptide reads, in one-letter code: uncharacterized protein (122 aa).

Transmembrane regions (helical) follow at residues isoleucine 34–valine 54 and phenylalanine 91–phenylalanine 111.

The protein localises to the cell membrane. This is an uncharacterized protein from Mycoplasma pneumoniae (strain ATCC 29342 / M129 / Subtype 1) (Mycoplasmoides pneumoniae).